The sequence spans 160 residues: Cytochrome b6-f complex subunit 4 (160 aa).

Transmembrane regions (helical) follow at residues 36–56 (LLYMFPVVILGTLSCITGLAV), 95–115 (LLGVLLMAAVPAGLLTVPFIE), and 131–151 (TVFLIGTVVAIWLGIGATLPI).

It belongs to the cytochrome b family. PetD subfamily. In terms of assembly, the 4 large subunits of the cytochrome b6-f complex are cytochrome b6, subunit IV (17 kDa polypeptide, petD), cytochrome f and the Rieske protein, while the 4 small subunits are petG, petL, petM and petN. The complex functions as a dimer.

Its subcellular location is the plastid. It localises to the chloroplast thylakoid membrane. In terms of biological role, component of the cytochrome b6-f complex, which mediates electron transfer between photosystem II (PSII) and photosystem I (PSI), cyclic electron flow around PSI, and state transitions. This Nephroselmis olivacea (Green alga) protein is Cytochrome b6-f complex subunit 4.